The chain runs to 301 residues: Acetylglutamate kinase (301 aa).

Substrate is bound by residues Gly-68–Gly-69, Arg-90, and Asn-195.

It belongs to the acetylglutamate kinase family. ArgB subfamily.

The protein localises to the cytoplasm. The enzyme catalyses N-acetyl-L-glutamate + ATP = N-acetyl-L-glutamyl 5-phosphate + ADP. It participates in amino-acid biosynthesis; L-arginine biosynthesis; N(2)-acetyl-L-ornithine from L-glutamate: step 2/4. In terms of biological role, catalyzes the ATP-dependent phosphorylation of N-acetyl-L-glutamate. In Pseudomonas putida (strain GB-1), this protein is Acetylglutamate kinase.